Reading from the N-terminus, the 284-residue chain is Tropomyosin Lep s 1.0101 (284 aa).

Residues 1–273 (MEAIKKKMQA…KDRYRALADE (273 aa)) are a coiled coil. The segment covering 155–171 (AEDADGKSDEVSRKMAQ) has biased composition (basic and acidic residues). A disordered region spans residues 155–187 (AEDADGKSDEVSRKMAQVEDDLEVAEDRVKSGD).

It belongs to the tropomyosin family. Homodimer.

Functionally, tropomyosin, in association with the troponin complex, plays a central role in the calcium dependent regulation of muscle contraction. The protein is Tropomyosin Lep s 1.0101 of Lepisma saccharinum (Silverfish).